A 346-amino-acid polypeptide reads, in one-letter code: MSDRNPLIDADRRADEDNTLRPQTLDDFVGQAAARANLKVFIEAAKVRGEALDHVLFVGPPGLGKTTLAQIMAKELGVNFRSTSGPVIAKAGDLAALLTNLEERDVLFIDEIHRLSPAVEEILYPAMEDFQLDLIIGEGPAARSVKIDLAKFTLVAATTRLGLLTTPLRDRFGIPVRLNFYTVEELEYIVRRGARIMQMGISSDGAREVARRSRGTPRIVGRLLRRVRDFALVAGADIIDRRIADEALSRLEVDNRGLDQLDRRYLNIIARNFGGGPVGIETIAAGLSEPRDAIEDIIEPYLIQQGFLQRTPRGRVLTAVAWQHLGLPAPAEIIQQSQYGLFMEDE.

The interval 1–181 is large ATPase domain (RuvB-L); that stretch reads MSDRNPLIDA…FGIPVRLNFY (181 aa). Residues leucine 20, arginine 21, glycine 62, lysine 65, threonine 66, threonine 67, 128–130, arginine 171, tyrosine 181, and arginine 218 each bind ATP; that span reads EDF. Threonine 66 contributes to the Mg(2+) binding site. The tract at residues 182-252 is small ATPAse domain (RuvB-S); sequence TVEELEYIVR…IADEALSRLE (71 aa). The tract at residues 255-346 is head domain (RuvB-H); sequence NRGLDQLDRR…SQYGLFMEDE (92 aa). Positions 291, 310, and 315 each coordinate DNA.

The protein belongs to the RuvB family. Homohexamer. Forms an RuvA(8)-RuvB(12)-Holliday junction (HJ) complex. HJ DNA is sandwiched between 2 RuvA tetramers; dsDNA enters through RuvA and exits via RuvB. An RuvB hexamer assembles on each DNA strand where it exits the tetramer. Each RuvB hexamer is contacted by two RuvA subunits (via domain III) on 2 adjacent RuvB subunits; this complex drives branch migration. In the full resolvosome a probable DNA-RuvA(4)-RuvB(12)-RuvC(2) complex forms which resolves the HJ.

Its subcellular location is the cytoplasm. It carries out the reaction ATP + H2O = ADP + phosphate + H(+). Functionally, the RuvA-RuvB-RuvC complex processes Holliday junction (HJ) DNA during genetic recombination and DNA repair, while the RuvA-RuvB complex plays an important role in the rescue of blocked DNA replication forks via replication fork reversal (RFR). RuvA specifically binds to HJ cruciform DNA, conferring on it an open structure. The RuvB hexamer acts as an ATP-dependent pump, pulling dsDNA into and through the RuvAB complex. RuvB forms 2 homohexamers on either side of HJ DNA bound by 1 or 2 RuvA tetramers; 4 subunits per hexamer contact DNA at a time. Coordinated motions by a converter formed by DNA-disengaged RuvB subunits stimulates ATP hydrolysis and nucleotide exchange. Immobilization of the converter enables RuvB to convert the ATP-contained energy into a lever motion, pulling 2 nucleotides of DNA out of the RuvA tetramer per ATP hydrolyzed, thus driving DNA branch migration. The RuvB motors rotate together with the DNA substrate, which together with the progressing nucleotide cycle form the mechanistic basis for DNA recombination by continuous HJ branch migration. Branch migration allows RuvC to scan DNA until it finds its consensus sequence, where it cleaves and resolves cruciform DNA. The sequence is that of Holliday junction branch migration complex subunit RuvB from Brucella melitensis biotype 2 (strain ATCC 23457).